Here is a 66-residue protein sequence, read N- to C-terminus: Small ribosomal subunit protein eS27 (66 aa).

Zn(2+) contacts are provided by Cys21, Cys24, Cys40, and Cys43. The C4-type zinc-finger motif lies at 21–43; the sequence is CRQCNNEQVIFSNATFPVRCLSC.

This sequence belongs to the eukaryotic ribosomal protein eS27 family. In terms of assembly, part of the 30S ribosomal subunit. Requires Zn(2+) as cofactor.

The polypeptide is Small ribosomal subunit protein eS27 (Sulfolobus acidocaldarius (strain ATCC 33909 / DSM 639 / JCM 8929 / NBRC 15157 / NCIMB 11770)).